The chain runs to 301 residues: Zinc finger protein 346 (301 aa).

Matrin-type zinc fingers lie at residues 55–85 and 117–141; these read SQCK…KVRR and KACS…GKVH. Positions 57, 60, 73, 79, 119, 122, 135, and 141 each coordinate Zn(2+). Residues 151-177 are disordered; it reads GSQTPALPQPEAQAKKDDGMQGPAEQD. Matrin-type zinc fingers lie at residues 180-210 and 230-257; these read RFCS…HMNK and YPCT…HKNH. Residues 250–283 form a disordered region; that stretch reads SGSKHKNHAKPKKGPNAFAPPPDNYQPDYQYPTN. A compositionally biased stretch (basic residues) spans 251–262; sequence GSKHKNHAKPKK.

It is found in the nucleus. The protein localises to the cytoplasm. Functionally, binds preferentially to dsRNA, but also to RNA-DNA hybrids. The protein is Zinc finger protein 346 of Danio rerio (Zebrafish).